The following is a 569-amino-acid chain: Dolichol kinase EVAN (569 aa).

Residues 1–22 (MKTTATSFVTGERVVVFVVVSR) lie on the Cytoplasmic side of the membrane. Residues 23–43 (ILLSLPLSLISHGFSLFLLSL) traverse the membrane as a helical segment. The Lumenal segment spans residues 44–67 (SAFLVEIRVETSPFLLSHFSSRRG). The helical transmembrane segment at 68–88 (ASSGILLGAVTLPSVMISKLV) threads the bilayer. Topologically, residues 89 to 108 (QLSRAISIHEAEQDELAHVT) are cytoplasmic. The chain crosses the membrane as a helical span at residues 109–129 (MQYWAASASCCAILIYLSVIM). At 130-147 (SQVRKDESLSSSSIWLTR) the chain is on the lumenal side. The chain crosses the membrane as a helical span at residues 148–168 (VSLTGTVLYGVACFVSLSMIS). Topologically, residues 169–178 (HTGLNTSLKM) are cytoplasmic. Residues 179-199 (LWMLFHGLAAVKLIRHLLCTF) form a helical membrane-spanning segment. Over 200 to 207 (PSCASIGE) the chain is Lumenal. A helical transmembrane segment spans residues 208–228 (ALLVTSGLVLYFGDFLACTIA). At 229–252 (KIFEKLIPVDLVSISYGIKRTETG) the chain is on the cytoplasmic side. The helical transmembrane segment at 253 to 273 (IIVQGLLLGLLLFPMVFRFVL) threads the bilayer. The Lumenal portion of the chain corresponds to 274 to 296 (HIYESSLRKRDARQRNCSDAAKS). Asn-289 carries an N-linked (GlcNAc...) asparagine glycan. The chain crosses the membrane as a helical span at residues 297–317 (VLFFVSLLFFMVVAVPSWMQF). The Cytoplasmic segment spans residues 318–340 (VHDFNQHPFLWVLTFVFSEPLKR). A helical membrane pass occupies residues 341 to 361 (LSLCIYWILLIVVSVSRFYNI). At 362–369 (SRSSKVER) the chain is on the lumenal side. Residues 370–390 (ILLRKYYHLMAVLMFLPALVL) form a helical membrane-spanning segment. The Cytoplasmic segment spans residues 391–393 (QPK). A helical transmembrane segment spans residues 394 to 414 (FLDLAFGAALAVFVALEIIRI). Residues 415–440 (WRIQPLGEPLHQFMNAFTDHRDSEHL) lie on the Lumenal side of the membrane. A helical transmembrane segment spans residues 441 to 461 (IVSHFSLLLGCALPIWMSSGF). Residues 462-464 (NDR) lie on the Cytoplasmic side of the membrane. Residues 465–485 (ALSPFAGILSLGIGDTMASMV) traverse the membrane as a helical segment. Topologically, residues 486–508 (GHKYGVLRWSKTGKKTVEGTAAG) are lumenal. Residues 487 to 503 (HKYGVLRWSKTGKKTVE) are CTP-binding. Residues 509–529 (ITSMMAVCFVLVPILASMGYI) form a helical membrane-spanning segment. At 530–548 (LSQGWWSLLVAVTATGMLE) the chain is on the cytoplasmic side. A helical transmembrane segment spans residues 549–569 (AYTAQLDNAFIPLVFYSLLCL).

This sequence belongs to the polyprenol kinase family.

It localises to the endoplasmic reticulum membrane. It catalyses the reaction a di-trans,poly-cis-dolichol + CTP = a di-trans,poly-cis-dolichyl phosphate + CDP + H(+). Essential for pollen development. Involved in protein N-glycosylation in the endoplasmic reticulum (ER), especially in the female gametophyte. Mediates pollen tube (PT) reception in synergids through protein glycosylation. This Arabidopsis thaliana (Mouse-ear cress) protein is Dolichol kinase EVAN.